Reading from the N-terminus, the 459-residue chain is UDP-N-acetylmuramoylalanine--D-glutamate ligase (459 aa).

An ATP-binding site is contributed by 120 to 126; it reads GSNGKTT.

It belongs to the MurCDEF family.

It localises to the cytoplasm. The catalysed reaction is UDP-N-acetyl-alpha-D-muramoyl-L-alanine + D-glutamate + ATP = UDP-N-acetyl-alpha-D-muramoyl-L-alanyl-D-glutamate + ADP + phosphate + H(+). It functions in the pathway cell wall biogenesis; peptidoglycan biosynthesis. In terms of biological role, cell wall formation. Catalyzes the addition of glutamate to the nucleotide precursor UDP-N-acetylmuramoyl-L-alanine (UMA). The chain is UDP-N-acetylmuramoylalanine--D-glutamate ligase from Lactobacillus acidophilus (strain ATCC 700396 / NCK56 / N2 / NCFM).